Reading from the N-terminus, the 348-residue chain is MKPIQSPSGVASPMKNRLRKRPDLSLPLPHRDVALAVPLPLPPPSSSSSAPASSSAISTNISAAKSLSELERVNRIGSGAGGTVYKVIHTPTSRPFALKVIYGNHEDTVRRQICREIEILRSVDHPNVVKCHDMFDHNGEIQVLLEFMDQGSLEGAHIWQEQELADLSRQILSGLAYLHRRHIVHRDIKPSNLLINSAKNVKIADFGVSRILAQTMDPCNSSVGTIAYMSPERINTDLNHGRYDGYAGDVWSLGVSILEFYLGRFPFAVSRQGDWASLMCAICMSQPPEAPATASQEFRHFVSCCLQSDPPKRWSAQQLLQHPFILKATGGPNLRQMLPPPRPLPSAS.

Disordered stretches follow at residues Met1–Leu26 and Leu35–Ser54. A Phosphoserine; by ASK7 modification is found at Ser6. The Protein kinase domain maps to Leu70–Ile325. ATP is bound by residues Ile76 to Val84 and Lys99. Asp187 functions as the Proton acceptor in the catalytic mechanism. Position 215 is a phosphothreonine (Thr215). Ser221 carries the phosphoserine; by ASK7 modification. Phosphoserine is present on Ser221. Thr225 is subject to Phosphothreonine; by ASK7. ADP-ribosylarginine; by HopF2 is present on Arg313.

It belongs to the protein kinase superfamily. STE Ser/Thr protein kinase family. MAP kinase kinase subfamily. In terms of assembly, interacts with P.syringae type III effector HopF2. Interacts with BZR1. Interacts with MPK6 and MPK3. Interacts with RACK1A, RACK1B and RACK1C. Interacts with MAPKKK5 mainly in the cytosol. Binds to BASL. Interacts with MAPKKK20. Post-translationally, phosphorylation at Thr-215 and Ser-221 by MAP kinase kinase kinases positively regulates kinase activity. Phosphorylated by MAPKKK5 and MAPKKK20 in response to abscisic acid (ABA). In terms of processing, ADP-ribosylation at Arg-313 by P.syringae type III effector HopF2 reduces the ability of the protein to phosphorylate downstream MPK6. Expressed higher in stems and leaves than in flowers and roots.

It carries out the reaction L-seryl-[protein] + ATP = O-phospho-L-seryl-[protein] + ADP + H(+). The enzyme catalyses L-threonyl-[protein] + ATP = O-phospho-L-threonyl-[protein] + ADP + H(+). It catalyses the reaction L-tyrosyl-[protein] + ATP = O-phospho-L-tyrosyl-[protein] + ADP + H(+). Activated through serine and threonine phosphorylation by MEKK1 and MAPKKK20 in response to abscisic acid (ABA). Inhibited through phosphorylation by GSK3/Shaggy-like kinase ASKs. Inhibited through ADP-Ribosylation by P.syringae HopF2. Activated after high light stress. In terms of biological role, mitogen-activated protein kinase kinase (MAPKK) which regulates abscisic acid (ABA) responses in a MAPKKK20-MKK5-MPK6 cascade involved in root growth (e.g. root cell division and elongation) and stomatal response, probably via MAPK6 activation by protein phosphorylation. Involved in the second phase of hydrogen peroxide generation during hypersensitive response-like cell death. Involved in the innate immune MAP kinase signaling cascade (MEKK1, MKK4/MKK5 and MPK3/MPK6) downstream of bacterial flagellin receptor FLS2. Activates by phosphorylation the downstream MPK3 and MPK6. YDA-MKK4/MKK5-MPK3/MPK6 module regulates stomatal cell fate before the guard mother cell (GMC) is specified. This MAPK cascade also functions downstream of the ER receptor in regulating coordinated local cell proliferation, which shapes the morphology of plant organs. MKK4 and MKK5 participate in the regulation of floral organ abscission. Target of the Pseudomonas syringae type III effector HopF2, that inhibits the activation of the downstream MPK6 and PAMP-triggered immunity. Plays a critical role in high light stress tolerance by the mediation of the Cu/Zn SODs CSD1 and CSD2 gene expression. Phosphorylates BZR1 in vitro. The protein is Mitogen-activated protein kinase kinase 5 of Arabidopsis thaliana (Mouse-ear cress).